Consider the following 628-residue polypeptide: LRR receptor kinase SERK2 (628 aa).

Residues 1–31 (MAEARLLRRRRLCLAVPFVWVVAVAVSRVGA) form the signal peptide. 4 LRR repeats span residues 97–121 (LKNLQYLELYSNNISGTIPNELGNL), 123–144 (NLVSLDLYLNNFTGFIPETLGQ), 145–169 (LYKLRFLRLNNNSLSGSIPKSLTNI), and 170–194 (TTLQVLDLSNNNLSGEVPSTGSFSL). N-linked (GlcNAc...) asparagine glycans are attached at residues N109, N120, N133, N155, N168, and N181. The chain crosses the membrane as a helical span at residues 243-263 (AIAGGVAAAAALLFAVPAIGF). Residue T303 is modified to Phosphothreonine. The Protein kinase domain maps to 306 to 593 (FSNKNILGRG…GLAERWEEWQ (288 aa)). 312 to 320 (LGRGGFGKV) provides a ligand contact to ATP. S329 carries the phosphoserine modification. ATP is bound at residue K334. T350 is subject to Phosphothreonine. Phosphoserine is present on residues S356 and S387. D433 functions as the Proton acceptor in the catalytic mechanism. 3 positions are modified to phosphothreonine: T463, T466, and T472. A Phosphoserine modification is found at S615. T616 is modified (phosphothreonine). S625 carries the phosphoserine modification.

This sequence belongs to the protein kinase superfamily. Ser/Thr protein kinase family. Interacts with BRI1. Interacts with XA21, XA26/XA3 and FLS2. Autophosphorylated on serine and threonine residues. As to expression, expressed in flag leaves. Expressed in roots, shoot apex, leaf blades, leaf sheaths, panicles and flowers. Expressed leaves, stems, sheaths and flowers.

The protein localises to the cell membrane. It carries out the reaction L-seryl-[protein] + ATP = O-phospho-L-seryl-[protein] + ADP + H(+). The enzyme catalyses L-threonyl-[protein] + ATP = O-phospho-L-threonyl-[protein] + ADP + H(+). LRR receptor kinase involved in positive regulation of somatic embryogenesis and defense response against the rice blast fungus pathogen Magnaporthe oryzae. Involved in the positive regulation of receptor kinase-mediated immunity. Required for immunity mediated by the LRR receptor kinases XA21 and XA26/XA3 which recognize effectors from the bacterial pathogen Xanthomonas oryzae pv. oryzae (Xoo). Required for the immune response mediated by the LRR receptor kinase FLS2 which recognizes specifically the bacterial flagellin (flg22) effector. Kinase activity and direct interaction with the immune receptors is critical for their function. Involved in the regulation of plant growth through the brassinosteroid (BR) signaling pathway. The polypeptide is LRR receptor kinase SERK2 (Oryza sativa subsp. japonica (Rice)).